We begin with the raw amino-acid sequence, 480 residues long: Sestrin-2 (480 aa).

Position 1 is an N-acetylmethionine (Met1). Residues 20-43 form a disordered region; the sequence is RGGVAGPETREEHREGQARRGSRG. Basic and acidic residues predominate over residues 27 to 37; that stretch reads ETREEHREGQA. The N-terminal domain; mediates the alkylhydroperoxide reductase activity stretch occupies residues 66–239; that stretch reads GLEALMSSGR…APSPPSEQGT (174 aa). Cys125 serves as the catalytic Cysteine sulfenic acid (-SOH) intermediate. A Glycyl lysine isopeptide (Lys-Gly) (interchain with G-Cter in ubiquitin) cross-link involves residue Lys175. 2 disordered regions span residues 221–251 and 272–291; these read DAEG…NSGG and LLRD…ELEK. The span at 223–238 shows a compositional bias: low complexity; the sequence is EGSPASQAPSPPSEQG. Phosphoserine is present on Ser249. A C-terminal domain; mediates TORC1 regulation region spans residues 308-480; the sequence is PHPDILCFVE…ALRAITRYMT (173 aa). L-leucine contacts are provided by residues 374 to 377, Thr386, and Glu451; that span reads TYNT.

Belongs to the sestrin family. As to quaternary structure, interacts with the GATOR2 complex which is composed of MIOS, SEC13, SEH1L, WDR24 and WDR59; the interaction is negatively regulated by leucine. Conveys leucine availability via direct interaction with SEH1L and WDR24 components of the GATOR2 complex. Interacts with RRAGA, RRAGB, RRAGC and RRAGD; may function as a guanine nucleotide dissociation inhibitor for RRAGs and regulate them. May interact with the TORC2 complex. Interacts with KEAP1, RBX1, SQSTM and ULK1; to regulate the degradation of KEAP1. May also associate with the complex composed of TSC1, TSC2 and the AMP-responsive protein kinase/AMPK to regulate TORC1 signaling. May interact with PRDX1. In terms of processing, phosphorylated by ULK1 at multiple sites. Post-translationally, ubiquitinated at Lys-175 by RNF167 via 'Lys-63'-linked polyubiquitination in response to leucine deprivation: ubiquitination promotes SESN2-interaction with the GATOR2 complex, leading to inhibit the TORC1 signaling pathway. Deubiquitinated at Lys-175 by STAMBPL1, promoting the TORC1 signaling pathway. Ubiquitinated by RNF186; ubiquitination mediates proteasomal degradation. In terms of tissue distribution, detected in heart, liver and skeletal muscles (at protein level).

It is found in the cytoplasm. The enzyme catalyses a hydroperoxide + L-cysteinyl-[protein] = S-hydroxy-L-cysteinyl-[protein] + an alcohol. In terms of biological role, functions as an intracellular leucine sensor that negatively regulates the mTORC1 signaling pathway through the GATOR complex. In absence of leucine, binds the GATOR subcomplex GATOR2 and prevents mTORC1 signaling. Binding of leucine to SESN2 disrupts its interaction with GATOR2 thereby activating the TORC1 signaling pathway. This stress-inducible metabolic regulator also plays a role in protection against oxidative and genotoxic stresses. May negatively regulate protein translation in response to endoplasmic reticulum stress, via mTORC1. May positively regulate the transcription by NFE2L2 of genes involved in the response to oxidative stress by facilitating the SQSTM1-mediated autophagic degradation of KEAP1. May also mediate TP53 inhibition of TORC1 signaling upon genotoxic stress. Moreover, may prevent the accumulation of reactive oxygen species (ROS) through the alkylhydroperoxide reductase activity born by the N-terminal domain of the protein. Was originally reported to contribute to oxidative stress resistance by reducing PRDX1. However, this could not be confirmed. The chain is Sestrin-2 from Mus musculus (Mouse).